Reading from the N-terminus, the 932-residue chain is Lon protease homolog 2, peroxisomal (932 aa).

The Lon N-terminal domain occupies Leu11–Asn260. A disordered region spans residues Arg298–Asp328. Residues Asn317–Asp328 are compositionally biased toward basic and acidic residues. ATP is bound at residue Gly486 to Thr493. The region spanning His729–Asp916 is the Lon proteolytic domain. Catalysis depends on residues Ser822 and Lys865. Residues Ser930 to Leu932 carry the Microbody targeting signal motif.

This sequence belongs to the peptidase S16 family.

It is found in the peroxisome matrix. The enzyme catalyses Hydrolysis of proteins in presence of ATP.. ATP-dependent serine protease that mediates the selective degradation of misfolded and unassembled polypeptides in the peroxisomal matrix. Necessary for type 2 peroxisome targeting signal (PTS2)-containing protein processing and facilitates peroxisome matrix protein import. This is Lon protease homolog 2, peroxisomal from Emericella nidulans (strain FGSC A4 / ATCC 38163 / CBS 112.46 / NRRL 194 / M139) (Aspergillus nidulans).